A 1863-amino-acid polypeptide reads, in one-letter code: Transient receptor potential cation channel subfamily M member 7 (1863 aa).

At methionine 1 the chain carries N-acetylmethionine. The Cytoplasmic segment spans residues 1–850; that stretch reads MSQKSWIEST…ITRKFYAFYH (850 aa). A Phosphoserine modification is found at serine 101. Over residues 544–555 the composition is skewed to low complexity; the sequence is NRRSGRNTSSST. The tract at residues 544–574 is disordered; the sequence is NRRSGRNTSSSTPQLRKSHETFGNRADKKEK. A compositionally biased stretch (basic and acidic residues) spans 560 to 573; the sequence is KSHETFGNRADKKE. A helical transmembrane segment spans residues 851–876; it reads APIVKFWFNTLAYLGFLMLYTFVVLV. Residues 877–882 are Extracellular-facing; the sequence is KMEQLP. A helical transmembrane segment spans residues 883–904; it reads SVQEWIVIAYIFTYAIEKVREV. Over 905 to 923 the chain is Cytoplasmic; the sequence is FMSEAGKISQKIKVWFSDY. The helical transmembrane segment at 924–943 threads the bilayer; it reads FNVSDTIAIISFFVGFGLRF. Residues 944–956 are Extracellular-facing; it reads GAKWNYINAYDNH. A helical transmembrane segment spans residues 957–980; sequence VFVAGRLIYCLNIIFWYVRLLDFL. At 981 to 999 the chain is on the cytoplasmic side; it reads AVNQQAGPYVMMIGKMVAN. A helical transmembrane segment spans residues 1000 to 1023; the sequence is MFYIVVIMALVLLSFGVPRKAILY. Residues 1024–1025 lie on the Extracellular side of the membrane; the sequence is PH. The segment at residues 1026 to 1066 is an intramembrane region (pore-forming); sequence EEPSWSLAKDIVFHPYWMIFGEVYAYEIDVCANDSTLPTIC. At 1067-1069 the chain is on the extracellular side; it reads GPG. The chain crosses the membrane as a helical span at residues 1070–1098; sequence TWLTPFLQAVYLFVQYIIMVNLLIAFFNN. The Cytoplasmic segment spans residues 1099-1863; the sequence is VYLQVKAISN…EATNSVRLML (765 aa). S-palmitoyl cysteine attachment occurs at residues cysteine 1143, cysteine 1144, and cysteine 1146. Residue threonine 1163 is modified to Phosphothreonine. Phosphoserine is present on residues serine 1191, serine 1193, serine 1224, serine 1255, and serine 1258. Positions 1198–1250 form a coiled coil; sequence RVTFERVEQMSIQIKEVGDRVNYIKRSLQSLDSQIGHLQDLSALTVDTLKTLT. At threonine 1265 the chain carries Phosphothreonine. 9 positions are modified to phosphoserine: serine 1300, serine 1357, serine 1360, serine 1385, serine 1386, serine 1389, serine 1394, serine 1395, and serine 1403. The interval 1380–1418 is disordered; it reads NQKLGSSPNSSPHMSSPPTKFSVSTPSQPSCKSHLESTT. Over residues 1385 to 1397 the composition is skewed to low complexity; that stretch reads SSPNSSPHMSSPP. Residues 1398–1410 show a composition bias toward polar residues; the sequence is TKFSVSTPSQPSC. Phosphothreonine is present on threonine 1404. Residues serine 1406 and serine 1445 each carry the phosphoserine modification. Position 1454 is a phosphothreonine (threonine 1454). Position 1455 is a phosphoserine (serine 1455). Threonine 1466 and threonine 1470 each carry phosphothreonine. A phosphoserine mark is found at serine 1491, serine 1498, serine 1502, serine 1511, serine 1525, and serine 1531. Residues 1498–1539 form a disordered region; sequence SRRASTEDSPEVDSKAALLPDWLRDRPSNREMPSEGGTLNGL. The segment covering 1519–1530 has biased composition (basic and acidic residues); sequence WLRDRPSNREMP. Threonine 1535 bears the Phosphothreonine mark. Position 1541 is a phosphoserine (serine 1541). Threonine 1549 is modified (phosphothreonine). A phosphoserine mark is found at serine 1565 and serine 1567. Position 1581 is a phosphothreonine (threonine 1581). One can recognise an Alpha-type protein kinase domain in the interval 1592-1822; the sequence is ILNNSMSSWS…CCRKLKLPDL (231 aa). Serine 1596 and serine 1613 each carry phosphoserine. Residues glycine 1619, glycine 1620, leucine 1621, arginine 1622, and lysine 1646 each contribute to the ADP site. Phosphoserine is present on serine 1658. The residue at position 1683 (threonine 1683) is a Phosphothreonine. ADP-binding residues include glutamate 1718, glutamate 1719, and methionine 1721. Histidine 1751 contacts Zn(2+). Aspartate 1765 (proton acceptor) is an active-site residue. Aspartate 1775 provides a ligand contact to ADP. Position 1777 is a phosphoserine (serine 1777). The Zn(2+) site is built by histidine 1808, cysteine 1810, and cysteine 1814. Threonine 1828 is modified (phosphothreonine). The disordered stretch occupies residues 1838-1863; that stretch reads ESSDLNLQSGNSTKESEATNSVRLML. Positions 1841-1863 are enriched in polar residues; that stretch reads DLNLQSGNSTKESEATNSVRLML. Residues serine 1846, serine 1849, and serine 1858 each carry the phosphoserine modification.

This sequence in the C-terminal section; belongs to the protein kinase superfamily. Alpha-type protein kinase family. ALPK subfamily. In the N-terminal section; belongs to the transient receptor (TC 1.A.4) family. LTrpC subfamily. TRPM7 sub-subfamily. Homodimer. Homotetramer. Forms heteromers with TRPM6; heteromeric channels are functionally different from the homomeric channels. Interacts with PLCB1. Requires Zn(2+) as cofactor. Palmitoylated; palmitoylation at Cys-1143, Cys-1144 and Cys-1146 promotes TRPM7 trafficking from the Golgi to the surface membrane. Post-translationally, autophosphorylated; autophosphorylation regulates TRPM7 kinase activity towards its substrates. In terms of processing, the C-terminal kinase domain can be cleaved from the channel segment in a cell-type-specific fashion. TRPM7 is cleaved by caspase-8, dissociating the kinase from the ion-conducting pore. The cleaved kinase fragments (M7CKs) can translocate to the cell nucleus and binds chromatin-remodeling complex proteins in a Zn(2+)-dependent manner to ultimately phosphorylate specific Ser/Thr residues of histones. Found to be expressed in brain and skeletal muscle, with stronger signals in kidney, heart, liver and spleen.

The protein localises to the cell membrane. Its subcellular location is the cytoplasmic vesicle membrane. It localises to the nucleus. The enzyme catalyses L-seryl-[protein] + ATP = O-phospho-L-seryl-[protein] + ADP + H(+). It carries out the reaction L-threonyl-[protein] + ATP = O-phospho-L-threonyl-[protein] + ADP + H(+). It catalyses the reaction Mg(2+)(in) = Mg(2+)(out). The catalysed reaction is Ca(2+)(in) = Ca(2+)(out). The enzyme catalyses Zn(2+)(in) = Zn(2+)(out). Channel displays constitutive activity. Channel activity is negatively regulated by cytosolic Mg(2+), Mg-ATP and low intracellular pH. Resting free cytosolic Mg(2+) and Mg-ATP concentrations seem to be sufficient to block native TRPM7 channel activity. TRPM7 channel activity is highly dependent on membrane levels of phosphatidylinositol 4,5 bisphosphate (PIP2). PIP2 hydrolysis negatively regulates TRPM7 channel activity. TRPM7 kinase activity does not affect channel activity. The kinase activity is controlled through the autophosphorylation of a serine/threonine-rich region located N-terminal to the catalytic domain. Functionally, bifunctional protein that combines an ion channel with an intrinsic kinase domain, enabling it to modulate cellular functions either by conducting ions through the pore or by phosphorylating downstream proteins via its kinase domain. The channel is highly permeable to divalent cations, specifically calcium (Ca2+), magnesium (Mg2+) and zinc (Zn2+) and mediates their influx. Controls a wide range of biological processes such as Ca2(+), Mg(2+) and Zn(2+) homeostasis, vesicular Zn(2+) release channel and intracellular Ca(2+) signaling, embryonic development, immune responses, cell motility, proliferation and differentiation. The C-terminal alpha-kinase domain autophosphorylates cytoplasmic residues of TRPM7. TRPM7 phosphorylates SMAD2, suggesting that TRPM7 kinase may play a role in activating SMAD signaling pathways. In vitro, TRPM7 kinase phosphorylates ANXA1 (annexin A1), myosin II isoforms and a variety of proteins with diverse cellular functions. In terms of biological role, the cleaved channel exhibits substantially higher current and potentiates Fas receptor signaling. The C-terminal kinase domain can be cleaved from the channel segment in a cell-type-specific fashion. In immune cells, the TRPM7 kinase domain is clipped from the channel domain by caspases in response to Fas-receptor stimulation. The cleaved kinase fragments can translocate to the nucleus, and bind chromatin-remodeling complex proteins in a Zn(2+)-dependent manner to ultimately phosphorylate specific Ser/Thr residues of histones known to be functionally important for cell differentiation and embryonic development. The sequence is that of Transient receptor potential cation channel subfamily M member 7 (Trpm7) from Mus musculus (Mouse).